The sequence spans 231 residues: GFP-like fluorescent chromoprotein FP538 (231 aa).

Phe-65 bears the Phenylalanine amide; atypical mark. Residues 66–68 constitute a cross-link (2-tetrahydro-2-pyridyl-5-imidazolinone (Lys-Gly)); it reads KYG. At Tyr-67 the chain carries 2,3-didehydrotyrosine.

It belongs to the GFP family. As to quaternary structure, homotetramer. Post-translationally, contains a chromophore consisting of modified amino acid residues. The chromophore is formed by autocatalytic backbone condensation between Xaa-N and Gly-(N+2), and oxidation of Tyr-(N+1) to didehydrotyrosine. In addition, the residue N lysine undergoes cyclization. The alpha-amino nitrogen is replaced by the epsilon-amino nitrogen, the peptide chain is broken, residue N-1 is released as an amide, and a double bond is formed between the alpha-carbon and the nitrogen so that a tetrahydropyridine ring results. Maturation of the chromophore requires nothing other than molecular oxygen. As to expression, tentacle and oral disk.

In terms of biological role, pigment protein that is yellow in color. The protein is GFP-like fluorescent chromoprotein FP538 of Zoanthus sp. (Green polyp).